The primary structure comprises 291 residues: Homoserine kinase (291 aa).

80–90 (RPSSGLGSSAA) is an ATP binding site.

Belongs to the GHMP kinase family. Homoserine kinase subfamily.

Its subcellular location is the cytoplasm. It carries out the reaction L-homoserine + ATP = O-phospho-L-homoserine + ADP + H(+). It participates in amino-acid biosynthesis; L-threonine biosynthesis; L-threonine from L-aspartate: step 4/5. In terms of biological role, catalyzes the ATP-dependent phosphorylation of L-homoserine to L-homoserine phosphate. The chain is Homoserine kinase from Haloquadratum walsbyi (strain DSM 16790 / HBSQ001).